The primary structure comprises 580 residues: CDKN2A-interacting protein (580 aa).

A2 bears the N-acetylalanine mark. The XRN2-binding (XTBD) domain occupies 19 to 133; that stretch reads VEALRCDGET…KVKKRGISSS (115 aa). Positions 129-356 are disordered; that stretch reads GISSSNEGVE…PKSSSSTNTS (228 aa). A Phosphoserine modification is found at S131. A compositionally biased stretch (basic and acidic residues) spans 155–167; it reads EQDHAKTSAKTER. The span at 168 to 179 shows a compositional bias: polar residues; that stretch reads ASAQQENSSTCI. A Glycyl lysine isopeptide (Lys-Gly) (interchain with G-Cter in SUMO1) cross-link involves residue K184. Positions 185–228 are enriched in low complexity; that stretch reads SESGNSARSSGISSQNSSTSDGDRSVSSQSSSSVSSQVTTAGSG. Residues 231-240 are compositionally biased toward basic and acidic residues; the sequence is SEAEAPDKHG. The residue at position 241 (S241) is a Phosphoserine. Positions 248–269 are enriched in polar residues; that stretch reads LKSSVNSHMTQSTDSRQQSGSP. Low complexity-rich tracts occupy residues 274–313 and 321–356; these read LEGSSASASQSSSEIEVPLLGSSGSSEVELPLLSSKPSSE and SKTSSEASVSSSVAKNSSSSGTSLLTPKSSSSTNTS. T346 bears the Phosphothreonine mark. Position 389 is a phosphoserine (S389). The DRBM domain maps to 462–537; sequence NHGELLNAAI…SREALKLFLK (76 aa).

Belongs to the CARF family. As to quaternary structure, interacts with CDKN2A/p14ARF, p53/TP53 and MDM2. Interacts with CHEK2 and MAPK3. Interacts with XRN2. In terms of processing, may be ubiquitinated. Ubiquitously expressed.

The protein localises to the nucleus. It is found in the nucleoplasm. Functionally, regulates DNA damage response in a dose-dependent manner through a number of signaling pathways involved in cell proliferation, apoptosis and senescence. In Homo sapiens (Human), this protein is CDKN2A-interacting protein (CDKN2AIP).